A 1444-amino-acid chain; its full sequence is ABC transporter G family member 39 (1444 aa).

The segment at 1 to 36 (MDIVRMGSVASGGGSVRRTASSWRGTSGRSDAFGRS) is disordered. The segment covering 19–29 (TASSWRGTSGR) has biased composition (polar residues). The ABC transporter 1 domain maps to 154–426 (LSAMRIVSSG…FEAMGFKCPE (273 aa)). 187 to 194 (GPPGSGKT) provides a ligand contact to ATP. The ABC transmembrane type-2 1 domain occupies 504-717 (ELTKACFSRE…AQNAIAVNEF (214 aa)). 6 consecutive transmembrane segments (helical) span residues 522–542 (FVYI…MTVF), 555–575 (GAIF…NGFA), 610–630 (IPIS…VMGF), 642–662 (VLLV…AALG), 667–687 (VADT…GFLI), and 754–774 (IGVG…ILFL). In terms of domain architecture, ABC transporter 2 spans 846–1098 (ITFDNIRYSV…HLINYFEGIQ (253 aa)). 891–898 (GVSGAGKT) serves as a coordination point for ATP. Residues 1171 to 1385 (TQCMACLWKQ…TLYGLVASQY (215 aa)) enclose the ABC transmembrane type-2 2 domain. The next 7 membrane-spanning stretches (helical) occupy residues 1192–1212 (ATRI…FLNL), 1220–1240 (LDLF…GIQN), 1278–1298 (IPHI…LIGF), 1305–1325 (FFWY…YGMM), 1335–1355 (IAAI…GFLI), 1362–1382 (IWWR…GLVA), and 1414–1434 (LGYV…VFAF).

This sequence belongs to the ABC transporter superfamily. ABCG family. PDR (TC 3.A.1.205) subfamily.

It is found in the membrane. May be a general defense protein. The protein is ABC transporter G family member 39 of Oryza sativa subsp. japonica (Rice).